A 572-amino-acid chain; its full sequence is Proline--tRNA ligase (572 aa).

The protein belongs to the class-II aminoacyl-tRNA synthetase family. ProS type 1 subfamily. As to quaternary structure, homodimer.

It is found in the cytoplasm. It catalyses the reaction tRNA(Pro) + L-proline + ATP = L-prolyl-tRNA(Pro) + AMP + diphosphate. In terms of biological role, catalyzes the attachment of proline to tRNA(Pro) in a two-step reaction: proline is first activated by ATP to form Pro-AMP and then transferred to the acceptor end of tRNA(Pro). As ProRS can inadvertently accommodate and process non-cognate amino acids such as alanine and cysteine, to avoid such errors it has two additional distinct editing activities against alanine. One activity is designated as 'pretransfer' editing and involves the tRNA(Pro)-independent hydrolysis of activated Ala-AMP. The other activity is designated 'posttransfer' editing and involves deacylation of mischarged Ala-tRNA(Pro). The misacylated Cys-tRNA(Pro) is not edited by ProRS. This Yersinia pseudotuberculosis serotype O:1b (strain IP 31758) protein is Proline--tRNA ligase.